The sequence spans 352 residues: Probable dual-specificity RNA methyltransferase RlmN (352 aa).

Glu92 (proton acceptor) is an active-site residue. Residues 98-328 enclose the Radical SAM core domain; that stretch reads YKHGFTACIS…ATIRREMGTD (231 aa). A disulfide bridge connects residues Cys105 and Cys333. [4Fe-4S] cluster contacts are provided by Cys112, Cys116, and Cys119. Residues 159-160, Ser191, 214-216, and Asn290 each bind S-adenosyl-L-methionine; these read GE and SLH. Catalysis depends on Cys333, which acts as the S-methylcysteine intermediate.

Belongs to the radical SAM superfamily. RlmN family. Requires [4Fe-4S] cluster as cofactor.

It is found in the cytoplasm. The catalysed reaction is adenosine(2503) in 23S rRNA + 2 reduced [2Fe-2S]-[ferredoxin] + 2 S-adenosyl-L-methionine = 2-methyladenosine(2503) in 23S rRNA + 5'-deoxyadenosine + L-methionine + 2 oxidized [2Fe-2S]-[ferredoxin] + S-adenosyl-L-homocysteine. The enzyme catalyses adenosine(37) in tRNA + 2 reduced [2Fe-2S]-[ferredoxin] + 2 S-adenosyl-L-methionine = 2-methyladenosine(37) in tRNA + 5'-deoxyadenosine + L-methionine + 2 oxidized [2Fe-2S]-[ferredoxin] + S-adenosyl-L-homocysteine. Its function is as follows. Specifically methylates position 2 of adenine 2503 in 23S rRNA and position 2 of adenine 37 in tRNAs. The chain is Probable dual-specificity RNA methyltransferase RlmN from Alkaliphilus metalliredigens (strain QYMF).